A 150-amino-acid chain; its full sequence is Flagellar assembly factor FliW (150 aa).

This sequence belongs to the FliW family. In terms of assembly, interacts with translational regulator CsrA. Interacts with flagellins FlaB1, FlaB2 and FlaB3.

Its subcellular location is the cytoplasm. Functionally, acts as an anti-CsrA protein, binds CsrA and prevents it from repressing translation of its target genes, one of which is flagellin. Binds to flagellin and participates in the assembly of the flagellum. Binds to the C-terminal region of flagellin, which is implicated in polymerization, and participates in the assembly of the flagellum. This chain is Flagellar assembly factor FliW, found in Treponema pallidum (strain Nichols).